The sequence spans 344 residues: GPALPP motifs-containing protein 1 (344 aa).

The disordered stretch occupies residues 1-309 (MARDLIGPAL…QERIPFDRDK (309 aa)). At Ala2 the chain carries N-acetylalanine. A GPALPP motif 1 motif is present at residues 7–12 (GPALPP). Ser28 bears the Phosphoserine mark. A GPALPP motif 2 motif is present at residues 30–35 (GPALPP). Acidic residues-rich tracts occupy residues 58 to 67 (GNQESEEDDT) and 80 to 93 (DDNDDDDDDDDDDG). The short motif at 96 to 101 (GPALPP) is the GPALPP motif 3 element. At Ser109 the chain carries Phosphoserine. The segment covering 111 to 120 (PRPIIGPALP) has biased composition (pro residues). Positions 116–121 (GPALPP) match the GPALPP motif 4 motif. Residues 128 to 137 (QKSDKGRDDP) show a composition bias toward basic and acidic residues. Thr142 is modified (phosphothreonine). Residues Ser144 and Ser145 each carry the phosphoserine modification. Composition is skewed to basic and acidic residues over residues 167 to 191 (EFEKRAQRMKEKLTKGDDDSSKPIV), 231 to 265 (PADRERKAKETQEARKSSSKKDEEHILSGRDKRLA), 273 to 283 (ESKRSESLMDI), and 291 to 309 (KAAEDKNKPQERIPFDRDK). A Glycyl lysine isopeptide (Lys-Gly) (interchain with G-Cter in SUMO2) cross-link involves residue Lys275. Lys312 participates in a covalent cross-link: Glycyl lysine isopeptide (Lys-Gly) (interchain with G-Cter in SUMO2).

This chain is GPALPP motifs-containing protein 1 (GPALPP1), found in Pongo abelii (Sumatran orangutan).